Reading from the N-terminus, the 854-residue chain is DNA mismatch repair protein MutS (854 aa).

614–621 (GPNMGGKS) is a binding site for ATP.

Belongs to the DNA mismatch repair MutS family.

Its function is as follows. This protein is involved in the repair of mismatches in DNA. It is possible that it carries out the mismatch recognition step. This protein has a weak ATPase activity. This is DNA mismatch repair protein MutS from Yersinia pestis bv. Antiqua (strain Antiqua).